The sequence spans 729 residues: Probable ATP-dependent RNA helicase DDX4 (729 aa).

The interval 22-246 (FEKDRYSSGA…ESGDTQGPKV (225 aa)) is disordered. Positions 29–45 (SGANGDTFNRTPASSSE) are enriched in polar residues. Over residues 71–80 (DPGESNKREN) the composition is skewed to basic and acidic residues. Composition is skewed to gly residues over residues 152–164 (RGSF…GFGR) and 204–214 (SGGGSGRGGYK). Ser-224 and Ser-228 each carry phosphoserine. Residues 230 to 249 (KSEAEGGESGDTQGPKVTYI) are interaction with RANBP9. Residues 290 to 318 (LTFEEANLCQTLNNNIAKAGYTKLTPVQK) carry the Q motif motif. Residues 321 to 504 (IPIIQGGRDL…GEFLKSNYLF (184 aa)) form the Helicase ATP-binding domain. 334–341 (AQTGSGKT) contributes to the ATP binding site. The short motif at 448-451 (DEAD) is the DEAD box element. The region spanning 532–677 (KLVEILRNIG…DVPAWLEEIA (146 aa)) is the Helicase C-terminal domain. Residues 706–720 (KSSLNTAGFSSTQAP) show a composition bias toward polar residues. The interval 706-729 (KSSLNTAGFSSTQAPNPVDDESWD) is disordered. The residue at position 727 (Ser-727) is a Phosphoserine.

This sequence belongs to the DEAD box helicase family. DDX4/VASA subfamily. As to quaternary structure, found in a mRNP complex, at least composed of TDRD1, TDRD6, TDRD7 and DDX4. Interacts with RANBP9. Interacts with RANBP10. Interacts with PIWIL2 and MAEL. Interacts with BMAL1 and CLOCK. Interacts with Tex19.1 and, probably, Tex19.2. Interacts with RBM46.

The protein resides in the cytoplasm. It is found in the perinuclear region. It carries out the reaction ATP + H2O = ADP + phosphate + H(+). Functionally, ATP-dependent RNA helicase required during spermatogenesis to repress transposable elements and preventing their mobilization, which is essential for the germline integrity. Acts via the piRNA metabolic process, which mediates the repression of transposable elements during meiosis by forming complexes composed of piRNAs and Piwi proteins and governs the methylation and subsequent repression of transposons. Involved in the secondary piRNAs metabolic process, the production of piRNAs in fetal male germ cells through a ping-pong amplification cycle. Required for PIWIL2 slicing-triggered piRNA biogenesis: helicase activity enables utilization of one of the slice cleavage fragments generated by PIWIL2 and processing these pre-piRNAs into piRNAs. In Bos taurus (Bovine), this protein is Probable ATP-dependent RNA helicase DDX4 (DDX4).